A 274-amino-acid chain; its full sequence is 2,3,4,5-tetrahydropyridine-2,6-dicarboxylate N-succinyltransferase (274 aa).

2 residues coordinate substrate: Arg104 and Asp141.

This sequence belongs to the transferase hexapeptide repeat family. In terms of assembly, homotrimer.

It is found in the cytoplasm. The enzyme catalyses (S)-2,3,4,5-tetrahydrodipicolinate + succinyl-CoA + H2O = (S)-2-succinylamino-6-oxoheptanedioate + CoA. The protein operates within amino-acid biosynthesis; L-lysine biosynthesis via DAP pathway; LL-2,6-diaminopimelate from (S)-tetrahydrodipicolinate (succinylase route): step 1/3. Inhibited by p-(chloromercuri)benzenesulfonic acid and cobalt. This Unknown prokaryotic organism protein is 2,3,4,5-tetrahydropyridine-2,6-dicarboxylate N-succinyltransferase (dapD).